The chain runs to 133 residues: Phosphoribosyl-AMP cyclohydrolase (133 aa).

Residue aspartate 77 participates in Mg(2+) binding. Cysteine 78 contributes to the Zn(2+) binding site. Mg(2+)-binding residues include aspartate 79 and aspartate 81. Residues cysteine 95 and cysteine 102 each coordinate Zn(2+).

The protein belongs to the PRA-CH family. As to quaternary structure, homodimer. Mg(2+) serves as cofactor. Requires Zn(2+) as cofactor.

The protein resides in the cytoplasm. It carries out the reaction 1-(5-phospho-beta-D-ribosyl)-5'-AMP + H2O = 1-(5-phospho-beta-D-ribosyl)-5-[(5-phospho-beta-D-ribosylamino)methylideneamino]imidazole-4-carboxamide. Its pathway is amino-acid biosynthesis; L-histidine biosynthesis; L-histidine from 5-phospho-alpha-D-ribose 1-diphosphate: step 3/9. Its function is as follows. Catalyzes the hydrolysis of the adenine ring of phosphoribosyl-AMP. The protein is Phosphoribosyl-AMP cyclohydrolase of Thiobacillus denitrificans (strain ATCC 25259 / T1).